The following is a 437-amino-acid chain: 3-ketoacyl-CoA thiolase (437 aa).

C99 acts as the Acyl-thioester intermediate in catalysis. Residues H392 and C422 each act as proton acceptor in the active site.

Belongs to the thiolase-like superfamily. Thiolase family. In terms of assembly, heterotetramer of two alpha chains (FadJ) and two beta chains (FadI).

The protein localises to the cytoplasm. It catalyses the reaction an acyl-CoA + acetyl-CoA = a 3-oxoacyl-CoA + CoA. Its pathway is lipid metabolism; fatty acid beta-oxidation. In terms of biological role, catalyzes the final step of fatty acid oxidation in which acetyl-CoA is released and the CoA ester of a fatty acid two carbons shorter is formed. The chain is 3-ketoacyl-CoA thiolase from Pectobacterium carotovorum subsp. carotovorum (strain PC1).